The primary structure comprises 212 residues: Uracil phosphoribosyltransferase (212 aa).

Residues Arg78, Arg103, and 130–138 (DPMLATGGS) each bind 5-phospho-alpha-D-ribose 1-diphosphate. Residues Ile193 and 198–200 (GDA) each bind uracil. Asp199 is a 5-phospho-alpha-D-ribose 1-diphosphate binding site.

The protein belongs to the UPRTase family. Mg(2+) is required as a cofactor.

The catalysed reaction is UMP + diphosphate = 5-phospho-alpha-D-ribose 1-diphosphate + uracil. It participates in pyrimidine metabolism; UMP biosynthesis via salvage pathway; UMP from uracil: step 1/1. Its activity is regulated as follows. Allosterically activated by GTP. Its function is as follows. Catalyzes the conversion of uracil and 5-phospho-alpha-D-ribose 1-diphosphate (PRPP) to UMP and diphosphate. In Ectopseudomonas mendocina (strain ymp) (Pseudomonas mendocina), this protein is Uracil phosphoribosyltransferase.